The primary structure comprises 564 residues: Type 2 DNA topoisomerase 6 subunit B (564 aa).

ATP-binding positions include N46, D78, 99 to 100 (TK), 109 to 116 (GQQGIGIS), and K471.

Belongs to the TOP6B family. In terms of assembly, homodimer. Heterotetramer of two Top6A and two Top6B chains.

The catalysed reaction is ATP-dependent breakage, passage and rejoining of double-stranded DNA.. Its function is as follows. Relaxes both positive and negative superturns and exhibits a strong decatenase activity. The polypeptide is Type 2 DNA topoisomerase 6 subunit B (Pyrococcus horikoshii (strain ATCC 700860 / DSM 12428 / JCM 9974 / NBRC 100139 / OT-3)).